The sequence spans 210 residues: MKVKVYNLLQEIEKEVELNPSVFCLKYRPDIIKLVIDWQLAKRMSGTHCTKTISGVSGTTKKPFKQKGTGNARQGSLRSVQMRGGGISHGPVVRSHEFDVPKKIRKQALKYALSYKLSVNKLIVVDDFNIGSNKTAVLKNLLKKYNYSNYSGFFCIDDQNVDRNFFLASRNLFNLNVVAQIGANPYDIMKHDCVMVTLSAAKSLEMRLAE.

Belongs to the universal ribosomal protein uL4 family. In terms of assembly, part of the 50S ribosomal subunit.

Functionally, one of the primary rRNA binding proteins, this protein initially binds near the 5'-end of the 23S rRNA. It is important during the early stages of 50S assembly. It makes multiple contacts with different domains of the 23S rRNA in the assembled 50S subunit and ribosome. Its function is as follows. Forms part of the polypeptide exit tunnel. The polypeptide is Large ribosomal subunit protein uL4 (Orientia tsutsugamushi (strain Boryong) (Rickettsia tsutsugamushi)).